We begin with the raw amino-acid sequence, 309 residues long: Ecotin-like protein 3 (309 aa).

The tract at residues 140-309 (QQELEAPAVS…KSGRDSRRNS (170 aa)) is disordered. Over residues 156 to 167 (VRERQNNPEGHA) the composition is skewed to basic and acidic residues. The segment covering 168 to 180 (HPVVVHSVESPEV) has biased composition (low complexity). Positions 181 to 190 (SGHKDGDQPM) are enriched in basic and acidic residues. Over residues 196-205 (LKQSCSNSSR) the composition is skewed to low complexity. Residues 209-221 (HSASGSSPKNTPL) show a composition bias toward polar residues. A compositionally biased stretch (basic and acidic residues) spans 261–279 (SDSTSSRKDDQDSGYEKKV). The span at 290 to 299 (SSPKRSASPK) shows a compositional bias: low complexity.

Belongs to the protease inhibitor I11 (ecotin) family.

The protein is Ecotin-like protein 3 of Leishmania braziliensis.